We begin with the raw amino-acid sequence, 305 residues long: Hydrogen peroxide-inducible genes activator (305 aa).

Residues 1–58 enclose the HTH lysR-type domain; that stretch reads MNIRDLEYLVALAEHRHFRRAADSCHVSQPTLSGQIRKLEDELGVMLLERTSRKVLFT. The segment at residues 18-37 is a DNA-binding region (H-T-H motif); the sequence is FRRAADSCHVSQPTLSGQIR. 2 disulfide bridges follow: C180-C259 and C199-C208. At C199 the chain carries Cysteine sulfenic acid (-SOH); alternate. S-glutathionyl cysteine; alternate is present on C199. S-nitrosocysteine; alternate is present on C199.

Belongs to the LysR transcriptional regulatory family. As to quaternary structure, homodimer and homotetramer. Post-translationally, oxidized on Cys-199; the Cys-SOH formed in response to oxidative signaling triggers a conformational change and the onset of transcriptional activity with a specific DNA-binding affinity. Cys-199-SOH rapidly reacts with Cys-208-SH to form a disulfide bond. In terms of processing, S-nitrosylation in response to nitrosative signaling triggers a conformational change and the onset of transcriptional activity with a specific DNA-binding affinity. Glutathionylation in response to redox signaling triggers the onset of transcriptional activity with a specific DNA-binding affinity.

Activated by oxidation of Cys-199 resulting in the alternative formation of cystine, sulfenic acid, S-nitroso- or glutathione-bound cysteine. Hydrogen peroxide sensor. Activates the expression of a regulon of hydrogen peroxide-inducible genes such as katG, gor, ahpC, ahpF, oxyS (a regulatory RNA), dps, fur and grxA. OxyR expression is negatively autoregulated by binding to a 43 bp region upstream of its own coding sequence. OxyR is inactivated by reduction of its essential disulfide bond by the product of GrxA, itself positively regulated by OxyR. Also has a positive regulatory effect on the production of surface proteins that control the colony morphology and auto-aggregation ability. The polypeptide is Hydrogen peroxide-inducible genes activator (oxyR) (Escherichia coli O157:H7).